We begin with the raw amino-acid sequence, 376 residues long: Gibberellic acid methyltransferase 1 (376 aa).

7 residues coordinate S-adenosyl-L-homocysteine: Y22, C64, N69, D104, L105, S136, and F137. W158 lines the gibberellin A9 pocket. Positions 175, 179, 265, 266, 268, and 269 each coordinate Mg(2+).

Belongs to the methyltransferase superfamily. Type-7 methyltransferase family. SABATH subfamily. The cofactor is Mg(2+). In terms of tissue distribution, expressed in siliques, developing seeds, anthers and germinating seeds. Not detected in leaves, stems, flowers and roots.

The catalysed reaction is gibberellin A9 + S-adenosyl-L-methionine = O-methyl gibberellin A9 + S-adenosyl-L-homocysteine. Up-regulated by K(+) and NH(4+), down-regulated by Zn(2+), Cu(2+), Fe(2+) and Fe(3+). In terms of biological role, methylates the carboxyl group of several gibberellins (GAs). Substrate preference is GA9 &gt; GA20 &gt; GA3 &gt; GA4 &gt; GA34 &gt; GA51 &gt; GA1 &gt; GA19 &gt; GA12. No activity with diterpenes abietic acid and ent-kaurenoic acid. This is Gibberellic acid methyltransferase 1 (GAMT1) from Arabidopsis thaliana (Mouse-ear cress).